Consider the following 1116-residue polypeptide: MAADLNLEWISLPRSWTYGITRGGRVFFINEEAKSTTWLHPVTGEAVVTGHRRQSTDLPTGWEEAYTFEGARYYINHNERKVTCKHPVTGQPSQDNCIFVVNEQTVATMTSEEKKERPISMINEASNYNVTSDYAVHPMSPVGRTSRASKKVHNFGKRSNSIKRNPNAPVVRRGWLYKQDSTGMKLWKKRWFVLSDLCLFYYRDEKEEGILGSILLPSFQIALLTSEDHINRKYAFKAAHPNMRTYYFCTDTGKEMELWMKAMLDAALVQTEPVKRVDKITSENAPTKETNNIPNHRVLIKPEIQNNQKNKEMSKIEEKKALEAEKYGFQKDGQDRPLTKINSVKLNSLPSEYESGSACPAQTVHYRPINLSSSENKIVNVSLADLRGGNRPNTGPLYTEADRVIQRTNSMQQLEQWIKIQKGRGHEEETRGVISYQTLPRNMPSHRAQIMARYPEGYRTLPRNSKTRPESICSVTPSTHDKTLGPGAEEKRRSMRDDTMWQLYEWQQRQFYNKQSTLPRHSTLSSPKTMVNISDQTMHSIPTSPSHGSIAAYQGYSPQRTYRSEVSSPIQRGDVTIDRRHRAHHPKHVYVPDRRSVPAGLTLQSVSPQSLQGKTLSQDEGRGTLYKYRPEEVDIDAKLSRLCEQDKVVHALEEKLQQLHKEKYTLEQALLSASQEIEMHADNPAAIQTVVLQRDDLQNGLLSTCRELSRATAELERAWREYDKLEYDVTVTRNQMQEQLDHLGEVQTESAGIQRAQIQKELWRIQDVMEGLSKHKQQRGTTEIGMIGSKPFSTVKYKNEGPDYRLYKSEPELTTVAEVDESNGEEKSEPVSEIETSVVKGSHFPVGVVPPRAKSPTPESSTIASYVTLRKTKKMMDLRTERPRSAVEQLCLAESTRPRMTVEEQMERIRRHQQACLREKKKGLNVIGASDQSPLQSPSNLRDNPFRTTQTRRRDDKELDTAIRENDVKPDHETPATEIVQLKETEPQNVDFSKELKKTENISYEMLFEPEPNGVNSVEMMDKERNKDKMPEDVTFSPQDETQTANHKPEEHPEENTKNSVDEQEETVISYESTPEVSRGNQTMAVKSLSPSPESSASPVPSTQPQLTEGSHFMCV.

N-acetylalanine is present on Ala2. The 34-residue stretch at 10–43 folds into the WW 1 domain; the sequence is ISLPRSWTYGITRGGRVFFINEEAKSTTWLHPVT. Ser55 carries the post-translational modification Phosphoserine. One can recognise a WW 2 domain in the interval 56–89; the sequence is TDLPTGWEEAYTFEGARYYINHNERKVTCKHPVT. The segment at 140–163 is disordered; sequence SPVGRTSRASKKVHNFGKRSNSIK. The segment covering 147–156 has biased composition (basic residues); sequence RASKKVHNFG. The PH domain occupies 169–268; it reads PVVRRGWLYK…WMKAMLDAAL (100 aa). Residue Lys301 forms a Glycyl lysine isopeptide (Lys-Gly) (interchain with G-Cter in SUMO2) linkage. A phosphoserine mark is found at Ser382 and Ser410. 2 positions are modified to phosphothreonine: Thr438 and Thr460. The segment at 459–495 is disordered; it reads RTLPRNSKTRPESICSVTPSTHDKTLGPGAEEKRRSM. Residues 479 to 495 show a composition bias toward basic and acidic residues; sequence THDKTLGPGAEEKRRSM. Residues Ser568, Ser607, Ser809, Ser855, Ser933, and Ser937 each carry the phosphoserine modification. Disordered stretches follow at residues 928–978 and 1025–1116; these read GASD…PATE and RNKD…FMCV. Over residues 930–949 the composition is skewed to polar residues; the sequence is SDQSPLQSPSNLRDNPFRTT. Basic and acidic residues predominate over residues 952 to 978; it reads RRRDDKELDTAIRENDVKPDHETPATE. Positions 1036–1046 are enriched in polar residues; it reads FSPQDETQTAN. Residues 1047-1061 show a composition bias toward basic and acidic residues; sequence HKPEEHPEENTKNSV. Positions 1070–1085 are enriched in polar residues; it reads SYESTPEVSRGNQTMA. The span at 1088–1101 shows a compositional bias: low complexity; it reads SLSPSPESSASPVP.

As to expression, highly expressed in heart and kidney.

It localises to the cytoplasm. The protein is Pleckstrin homology domain-containing family A member 5 (PLEKHA5) of Homo sapiens (Human).